A 178-amino-acid chain; its full sequence is Ribosome maturation factor RimP (178 aa).

The protein belongs to the RimP family.

The protein resides in the cytoplasm. In terms of biological role, required for maturation of 30S ribosomal subunits. This chain is Ribosome maturation factor RimP, found in Maricaulis maris (strain MCS10) (Caulobacter maris).